The sequence spans 137 residues: MILGIGTDLANIERVEKTLARFGDRFRNRVFTPLEQARAERRADVAGTYAKRWAAKEACSKALGTGLRMGIAWKDMSVANLVTGQPVMELTGWAAERLAAMTPPGHEAIVHVSLTDDHPWAQAFVVIEARPLAAPPA.

Residues D8 and E57 each coordinate Mg(2+).

This sequence belongs to the P-Pant transferase superfamily. AcpS family. It depends on Mg(2+) as a cofactor.

The protein localises to the cytoplasm. It catalyses the reaction apo-[ACP] + CoA = holo-[ACP] + adenosine 3',5'-bisphosphate + H(+). Functionally, transfers the 4'-phosphopantetheine moiety from coenzyme A to a Ser of acyl-carrier-protein. The sequence is that of Holo-[acyl-carrier-protein] synthase from Cereibacter sphaeroides (strain ATCC 17025 / ATH 2.4.3) (Rhodobacter sphaeroides).